Consider the following 301-residue polypeptide: Acetylglutamate kinase (301 aa).

Substrate contacts are provided by residues 76-77 (GG), Arg98, and Asn192.

Belongs to the acetylglutamate kinase family. ArgB subfamily.

It is found in the cytoplasm. It catalyses the reaction N-acetyl-L-glutamate + ATP = N-acetyl-L-glutamyl 5-phosphate + ADP. The protein operates within amino-acid biosynthesis; L-arginine biosynthesis; N(2)-acetyl-L-ornithine from L-glutamate: step 2/4. Its function is as follows. Catalyzes the ATP-dependent phosphorylation of N-acetyl-L-glutamate. In Chlorobaculum parvum (strain DSM 263 / NCIMB 8327) (Chlorobium vibrioforme subsp. thiosulfatophilum), this protein is Acetylglutamate kinase.